The following is a 424-amino-acid chain: MYPYSDADAFRRHPERAKSSQLRTSAVDTRSAFARDRARVLHSAALRRLADKTQVVGPNDGDTPRTRLTHSLEVAQIARGIGAGLDLDPDLCDLAGLCHDIGHPPYGHNGENALNEVAAACGGFEGNAQTLRILTRLEPKIVSDEGASFGLNLSRAALDAACKYPWAKTNADGSVNKKYSAYDEDAEILDWIRQGHEDLRPPIEAQVMDFSDDIAYSVHDVEDGIVSGRIDLKVLWDLVELAALADKGAAAFGGSPAELIEGAASLRELPVVAAAADFDFSLRSYAALKAMTSELVGRYVGSTIESTKKTHAGIDVGRMYGDLIIPETAASEVKLLKTLAVLYVMDDPGHLARQNRQRDRIFRVFDYLVLGAPGSLDPMYRQWFIEANSESEQIRVIVDQIASMTESRLERLARNAADISGFLG.

The tract at residues Met-1–Thr-24 is disordered. A compositionally biased stretch (basic and acidic residues) spans Asp-8 to Lys-18. The region spanning Arg-67–Ser-217 is the HD domain.

The protein belongs to the dGTPase family. Type 2 subfamily.

In Corynebacterium glutamicum (strain R), this protein is Deoxyguanosinetriphosphate triphosphohydrolase-like protein.